The following is a 364-amino-acid chain: Peroxidase (364 aa).

An N-terminal signal peptide occupies residues 1-20; the sequence is MKLSLFSTFAAVIIGALALP. Pyrrolidone carboxylic acid is present on glutamine 21. Cystine bridges form between cysteine 32/cysteine 44, cysteine 43/cysteine 313, cysteine 63/cysteine 149, and cysteine 277/cysteine 342. The active-site Proton acceptor is histidine 76. Positions 77, 95, 97, and 99 each coordinate Ca(2+). A glycan (N-linked (GlcNAc...) (high mannose) asparagine) is linked at asparagine 163. Histidine 204 is a heme b binding site. The Ca(2+) site is built by serine 205, aspartate 222, threonine 224, valine 227, and aspartate 229.

Belongs to the peroxidase family. Ligninase subfamily. The cofactor is Ca(2+). Heme b is required as a cofactor.

The protein localises to the secreted. The enzyme catalyses 2 a phenolic donor + H2O2 = 2 a phenolic radical donor + 2 H2O. The protein is Peroxidase of Arthromyces ramosus.